We begin with the raw amino-acid sequence, 298 residues long: 4-diphosphocytidyl-2-C-methyl-D-erythritol kinase (298 aa).

Lys-11 is an active-site residue. 94–104 lines the ATP pocket; that stretch reads PMGGGLGGGSS. Asp-136 is a catalytic residue.

Belongs to the GHMP kinase family. IspE subfamily.

It catalyses the reaction 4-CDP-2-C-methyl-D-erythritol + ATP = 4-CDP-2-C-methyl-D-erythritol 2-phosphate + ADP + H(+). It participates in isoprenoid biosynthesis; isopentenyl diphosphate biosynthesis via DXP pathway; isopentenyl diphosphate from 1-deoxy-D-xylulose 5-phosphate: step 3/6. Catalyzes the phosphorylation of the position 2 hydroxy group of 4-diphosphocytidyl-2C-methyl-D-erythritol. This is 4-diphosphocytidyl-2-C-methyl-D-erythritol kinase from Chromohalobacter salexigens (strain ATCC BAA-138 / DSM 3043 / CIP 106854 / NCIMB 13768 / 1H11).